The primary structure comprises 21 residues: 5-methyltetrahydropteroyltriglutamate--homocysteine methyltransferase (21 aa).

It belongs to the vitamin-B12 independent methionine synthase family. It depends on Zn(2+) as a cofactor.

The protein localises to the cytoplasm. It catalyses the reaction 5-methyltetrahydropteroyltri-L-glutamate + L-homocysteine = tetrahydropteroyltri-L-glutamate + L-methionine. It functions in the pathway amino-acid biosynthesis; L-methionine biosynthesis via de novo pathway; L-methionine from L-homocysteine (MetE route): step 1/1. Its function is as follows. Catalyzes the transfer of a methyl group from 5-methyltetrahydrofolate to homocysteine resulting in methionine formation. The chain is 5-methyltetrahydropteroyltriglutamate--homocysteine methyltransferase from Populus euphratica (Euphrates poplar).